Here is a 492-residue protein sequence, read N- to C-terminus: Cytochrome P450 26A1 (492 aa).

Residue Cys-437 participates in heme binding.

This sequence belongs to the cytochrome P450 family. It depends on heme as a cofactor. As to expression, expressed primarily in ovary, brain and eyes.

It localises to the endoplasmic reticulum membrane. It is found in the microsome membrane. It carries out the reaction all-trans-retinoate + reduced [NADPH--hemoprotein reductase] + O2 = all-trans-(4S)-hydroxyretinoate + oxidized [NADPH--hemoprotein reductase] + H2O + H(+). Its function is as follows. A cytochrome P450 monooxygenase involved in the metabolism of all-trans retinoic acid (atRA), a signaling molecule that binds to retinoic acid receptors and regulates gene transcription. May regulate at-RA signaling during hindbrain development. Mechanistically, uses molecular oxygen inserting one oxygen atom into a substrate, and reducing the second into a water molecule, with two electrons provided by NADPH via cytochrome P450 reductase (CPR; NADPH-ferrihemoprotein reductase). Catalyzes the hydroxylation of carbon hydrogen bonds of atRA primarily at C-4. Has no activity toward 9-cis and 13-cis retinoic acid stereoisomers. May play a role in the oxidative metabolism of xenobiotics such as tazarotenic acid. This Xenopus laevis (African clawed frog) protein is Cytochrome P450 26A1 (cyp26a1).